A 204-amino-acid polypeptide reads, in one-letter code: Urease accessory protein UreG (204 aa).

Residue 12-19 (GPVGSGKT) coordinates GTP.

This sequence belongs to the SIMIBI class G3E GTPase family. UreG subfamily. Homodimer. UreD, UreF and UreG form a complex that acts as a GTP-hydrolysis-dependent molecular chaperone, activating the urease apoprotein by helping to assemble the nickel containing metallocenter of UreC. The UreE protein probably delivers the nickel.

The protein resides in the cytoplasm. In terms of biological role, facilitates the functional incorporation of the urease nickel metallocenter. This process requires GTP hydrolysis, probably effectuated by UreG. The protein is Urease accessory protein UreG of Ectopseudomonas mendocina (strain ymp) (Pseudomonas mendocina).